Here is a 1296-residue protein sequence, read N- to C-terminus: Capping protein, Arp2/3 and myosin-I linker protein 2 (1296 aa).

LRR repeat units follow at residues 63–87 (DCTF…TFEL), 88–110 (ESLP…AQHV), 248–271 (ELVL…LAGH), 273–296 (NSGL…ALGR), 305–328 (DSTL…DSGG), 363–386 (CSSL…AAPA), 395–415 (TRML…ALRA), 426–448 (IHDL…VIQD), 453–477 (AGAL…VLAI), 480–506 (SRSL…VLHR), 515–538 (DCPL…LIRA), 542–565 (NPKL…MLAK), 570–594 (NTRL…VAQA), 598–621 (NHSL…RPEL), and 836–859 (TMAP…GLEE). Residues 507-601 (IAQLMQDDDC…AQALEQNHSL (95 aa)) form a tropomodulin-like region. A necessary for localization at the cell membrane region spans residues 975-1002 (ATPVPRTLRKKLGTLFAFKKPRSTRGPR). Positions 988–1296 (TLFAFKKPRS…TDQRGGGPNP (309 aa)) are disordered. Ser-1008 carries the phosphoserine modification. Composition is skewed to basic and acidic residues over residues 1079–1091 (RPDK…RGDT) and 1118–1134 (ESKR…KAGS). Residue Ser-1134 is modified to Phosphoserine. Thr-1145 bears the Phosphothreonine mark. The segment covering 1176–1185 (TWKTLGQQLN) has biased composition (polar residues). Omega-N-methylarginine is present on Arg-1191. Composition is skewed to pro residues over residues 1199-1209 (PGPPSPCPSPS) and 1267-1285 (PLPP…PPSP). Ser-1203 and Ser-1281 each carry phosphoserine.

The protein belongs to the CARMIL family. Forms homodimers. Interacts (via C-terminus) with heterodimeric capping protein (CP); the interaction inhibits CP activity and hence promotes actin polymerization at the barbed end of actin filaments.

Its subcellular location is the cytoplasm. It is found in the cytoskeleton. The protein resides in the cell membrane. The protein localises to the cell projection. It localises to the lamellipodium. Its subcellular location is the ruffle. In terms of biological role, cell membrane-cytoskeleton-associated protein that plays a role in the regulation of actin polymerization at the barbed end of actin filaments. Prevents F-actin heterodimeric capping protein (CP) activity at the leading edges of migrating cells, and hence generates uncapped barbed ends and enhances actin polymerization. Plays a role in cell protrusion formations; involved in cell polarity, lamellipodial assembly, membrane ruffling and macropinosome formations. Involved as well in cell migration and invadopodia formation during wound healing. Required for CD28-mediated stimulation of NF-kappa-B signaling, involved in naive T cells activation, maturation into T memory cells, and differentiation into T helper cells. Required for CD28-mediated differentiation of T regulatory cells. This chain is Capping protein, Arp2/3 and myosin-I linker protein 2, found in Mus musculus (Mouse).